The chain runs to 386 residues: Formate-dependent phosphoribosylglycinamide formyltransferase (386 aa).

N(1)-(5-phospho-beta-D-ribosyl)glycinamide-binding positions include 15 to 16 (EL) and Glu75. ATP-binding positions include Arg107, Lys148, 153-158 (SSGKGQ), 188-191 (EQFI), and Glu196. Positions 112-301 (ALAVQQLNLQ…EFELHLRAIV (190 aa)) constitute an ATP-grasp domain. Mg(2+) contacts are provided by Glu260 and Glu272. Residues Asp279, Lys349, and 356–357 (RR) contribute to the N(1)-(5-phospho-beta-D-ribosyl)glycinamide site.

Belongs to the PurK/PurT family. As to quaternary structure, homodimer.

It catalyses the reaction N(1)-(5-phospho-beta-D-ribosyl)glycinamide + formate + ATP = N(2)-formyl-N(1)-(5-phospho-beta-D-ribosyl)glycinamide + ADP + phosphate + H(+). Its pathway is purine metabolism; IMP biosynthesis via de novo pathway; N(2)-formyl-N(1)-(5-phospho-D-ribosyl)glycinamide from N(1)-(5-phospho-D-ribosyl)glycinamide (formate route): step 1/1. Involved in the de novo purine biosynthesis. Catalyzes the transfer of formate to 5-phospho-ribosyl-glycinamide (GAR), producing 5-phospho-ribosyl-N-formylglycinamide (FGAR). Formate is provided by PurU via hydrolysis of 10-formyl-tetrahydrofolate. This chain is Formate-dependent phosphoribosylglycinamide formyltransferase, found in Francisella tularensis subsp. holarctica (strain LVS).